The sequence spans 377 residues: O-phospho-L-seryl-tRNA:Cys-tRNA synthase (377 aa).

Pyridoxal 5'-phosphate-binding positions include Ala82–Arg83, Asn189, and Ser212–His214. The residue at position 215 (Lys215) is an N6-(pyridoxal phosphate)lysine.

The protein belongs to the SepCysS family. Homodimer. Interacts with SepRS. Pyridoxal 5'-phosphate is required as a cofactor.

The catalysed reaction is O-phospho-L-seryl-tRNA(Cys) + hydrogen sulfide + H(+) = L-cysteinyl-tRNA(Cys) + phosphate. Converts O-phospho-L-seryl-tRNA(Cys) (Sep-tRNA(Cys)) to L-cysteinyl-tRNA(Cys) (Cys-tRNA(Cys)). The chain is O-phospho-L-seryl-tRNA:Cys-tRNA synthase from Methanocaldococcus jannaschii (strain ATCC 43067 / DSM 2661 / JAL-1 / JCM 10045 / NBRC 100440) (Methanococcus jannaschii).